The sequence spans 260 residues: Neuraminyllactose-binding hemagglutinin (260 aa).

An N-terminal signal peptide occupies residues 1–27 (MKTNGHFKDFAWKKCLLGASVGALLVG). The N-palmitoyl cysteine moiety is linked to residue Cys28. Residue Cys28 is the site of S-diacylglycerol cysteine attachment. Positions 134–139 (KRTIQK) are N-acetyl-neuraminyl-alpha(2,3)-lactose binding motif.

It is found in the cell outer membrane. This Helicobacter pylori (Campylobacter pylori) protein is Neuraminyllactose-binding hemagglutinin (hpaA).